Here is a 555-residue protein sequence, read N- to C-terminus: MSSTLDTITPMPEGGNNQTFVNISKEDLKVETEHYENVAYIANAHDGLIDENLVRAENEDKVTPYFMFLISVAAIAGFLFGYDTGIVGAALPMVGTSLGHTLSATESEIITAGTTIGAIFGASILGTMADKLGRKWAMIISDFAFTAGAIIIAASYSVPQIIVGRLVLGVGVGGAAVIAPLYIAELAPTAVRGRCVGANAFCIPFGQVVASAIGAGFQAGVPYHIGWRVLFGLGVVPSVVQLCLMHFLPESPRVLVLRGKEQEARACLKKIYGNATDDIIDLKLRIVKQYVAATTTMQRDLSFTERAKKYWTHKPYRRAIISVSGVQAFGQLTGFNTLLYYSGTIFGLLGLKNGAAAGLIPSCLNALFVFIGMSIVDKVGRRKLMITFIPGMMIAFTWTIISFHFLTKPTGGLLLKDYQYSTPLVGSVLGSIVLFVIPFGLTYSHIIWYQSEFLPLEIRAAGSAISTTACWLANLVVSVAYLTQLEKLGATGTYGLYLGFITIGYIFVYFCYPETKGLSIDETAEIFIDGFGIEKAHQMLREKRAFAAELYAGRA.

Residues 1–61 (MSSTLDTITP…NLVRAENEDK (61 aa)) are Cytoplasmic-facing. A helical transmembrane segment spans residues 62 to 82 (VTPYFMFLISVAAIAGFLFGY). The Extracellular portion of the chain corresponds to 83 to 108 (DTGIVGAALPMVGTSLGHTLSATESE). A helical transmembrane segment spans residues 109–129 (IITAGTTIGAIFGASILGTMA). At 130-142 (DKLGRKWAMIISD) the chain is on the cytoplasmic side. Residues 143 to 163 (FAFTAGAIIIAASYSVPQIIV) form a helical membrane-spanning segment. Residues 164–165 (GR) are Extracellular-facing. A helical transmembrane segment spans residues 166 to 186 (LVLGVGVGGAAVIAPLYIAEL). Over 187–200 (APTAVRGRCVGANA) the chain is Cytoplasmic. A helical membrane pass occupies residues 201–221 (FCIPFGQVVASAIGAGFQAGV). At 222–228 (PYHIGWR) the chain is on the extracellular side. The chain crosses the membrane as a helical span at residues 229–249 (VLFGLGVVPSVVQLCLMHFLP). At 250–328 (ESPRVLVLRG…AIISVSGVQA (79 aa)) the chain is on the cytoplasmic side. A helical membrane pass occupies residues 329–349 (FGQLTGFNTLLYYSGTIFGLL). Residues 350 to 355 (GLKNGA) lie on the Extracellular side of the membrane. A helical membrane pass occupies residues 356-376 (AAGLIPSCLNALFVFIGMSIV). The Cytoplasmic portion of the chain corresponds to 377–385 (DKVGRRKLM). Residues 386 to 406 (ITFIPGMMIAFTWTIISFHFL) form a helical membrane-spanning segment. The Extracellular segment spans residues 407–427 (TKPTGGLLLKDYQYSTPLVGS). Residues 428–448 (VLGSIVLFVIPFGLTYSHIIW) form a helical membrane-spanning segment. The Cytoplasmic segment spans residues 449–461 (YQSEFLPLEIRAA). A helical membrane pass occupies residues 462–482 (GSAISTTACWLANLVVSVAYL). Residues 483 to 487 (TQLEK) lie on the Extracellular side of the membrane. Residues 488–508 (LGATGTYGLYLGFITIGYIFV) form a helical membrane-spanning segment. Over 509 to 555 (YFCYPETKGLSIDETAEIFIDGFGIEKAHQMLREKRAFAAELYAGRA) the chain is Cytoplasmic.

Belongs to the major facilitator superfamily. Sugar transporter (TC 2.A.1.1) family.

It localises to the cell membrane. It catalyses the reaction myo-inositol(out) + H(+)(out) = myo-inositol(in) + H(+)(in). In terms of biological role, transporter for myo-inositol. This is Myo-inositol transporter 2 from Cryptococcus neoformans var. grubii serotype A (strain H99 / ATCC 208821 / CBS 10515 / FGSC 9487) (Filobasidiella neoformans var. grubii).